The chain runs to 952 residues: Leucine--tRNA ligase (952 aa).

Residues 65 to 76 (PYPSGAGLHVGH) carry the 'HIGH' region motif. Positions 727-731 (KMGKS) match the 'KMSKS' region motif. Residue Lys-730 coordinates ATP.

Belongs to the class-I aminoacyl-tRNA synthetase family.

The protein resides in the cytoplasm. It carries out the reaction tRNA(Leu) + L-leucine + ATP = L-leucyl-tRNA(Leu) + AMP + diphosphate. This is Leucine--tRNA ligase from Salinispora arenicola (strain CNS-205).